Reading from the N-terminus, the 248-residue chain is Homeotic protein ultrabithorax (248 aa).

Gly residues predominate over residues 116–125 (GTGGGGGGSA). The tract at residues 116–191 (GTGGGGGGSA…GSAGVVGGAG (76 aa)) is disordered. Residues 126 to 139 (GSANGANNTANGQN) show a composition bias toward low complexity. 2 stretches are compositionally biased toward gly residues: residues 140-152 (TSGG…GGGM) and 182-191 (GSAGVVGGAG). The short motif at 241–246 (FYPWMA) is the Antp-type hexapeptide element.

It belongs to the Antp homeobox family.

Its subcellular location is the nucleus. Its function is as follows. Sequence-specific transcription factor which is part of a developmental regulatory system that provides cells with specific positional identities on the anterior-posterior axis. Binds the consensus region 5'-TTAAT[GT][GA]-3'. The sequence is that of Homeotic protein ultrabithorax (Ubx) from Musca domestica (House fly).